The primary structure comprises 501 residues: Glucose-6-phosphate exchanger SLC37A2 (501 aa).

Residues 19 to 39 form a helical membrane-spanning segment; it reads SWFRGLILLLTFLIYACYHMS. N-linked (GlcNAc...) asparagine glycosylation is found at asparagine 53, asparagine 62, and asparagine 68. Transmembrane regions (helical) follow at residues 88 to 108, 118 to 138, 145 to 165, 189 to 209, and 210 to 230; these read GGVD…SGVF, LSAG…GYFW, YFVV…PSVV, SVGN…QWGL, and SFIV…LFLI. The tract at residues 240-262 is disordered; the sequence is PPQHHGEPAENQDNPEDPGNSPC. Transmembrane regions (helical) follow at residues 302 to 322, 334 to 354, 362 to 382, 391 to 411, 434 to 454, and 462 to 482; these read LCLL…PLYI, GDLS…AGLV, ATTC…YNYI, IVML…ITTA, AIID…AGLI, and VFYM…RLVY.

The protein belongs to the major facilitator superfamily. Organophosphate:Pi antiporter (OPA) (TC 2.A.1.4) family. As to expression, detected in intestine and pancreas. Lower expression is also detected in liver and kidney.

It is found in the endoplasmic reticulum membrane. It catalyses the reaction D-glucose 6-phosphate(in) + phosphate(out) = D-glucose 6-phosphate(out) + phosphate(in). With respect to regulation, inhibited by vanadate but not by chlorogenic acid. Inorganic phosphate and glucose-6-phosphate antiporter. May transport cytoplasmic glucose-6-phosphate into the lumen of the endoplasmic reticulum and translocate inorganic phosphate into the opposite direction. Independent of a lumenal glucose-6-phosphatase. May not play a role in homeostatic regulation of blood glucose levels. The chain is Glucose-6-phosphate exchanger SLC37A2 from Homo sapiens (Human).